We begin with the raw amino-acid sequence, 200 residues long: Pyridoxal 5'-phosphate synthase subunit PdxT (200 aa).

Residue 46–48 (GES) participates in L-glutamine binding. The active-site Nucleophile is cysteine 78. L-glutamine-binding positions include arginine 107 and 138–139 (IR). Residues histidine 175 and glutamate 177 each act as charge relay system in the active site.

The protein belongs to the glutaminase PdxT/SNO family. As to quaternary structure, in the presence of PdxS, forms a dodecamer of heterodimers. Only shows activity in the heterodimer.

The enzyme catalyses aldehydo-D-ribose 5-phosphate + D-glyceraldehyde 3-phosphate + L-glutamine = pyridoxal 5'-phosphate + L-glutamate + phosphate + 3 H2O + H(+). The catalysed reaction is L-glutamine + H2O = L-glutamate + NH4(+). It participates in cofactor biosynthesis; pyridoxal 5'-phosphate biosynthesis. Catalyzes the hydrolysis of glutamine to glutamate and ammonia as part of the biosynthesis of pyridoxal 5'-phosphate. The resulting ammonia molecule is channeled to the active site of PdxS. The chain is Pyridoxal 5'-phosphate synthase subunit PdxT from Corynebacterium glutamicum (strain R).